The following is a 132-amino-acid chain: Small ribosomal subunit protein uS8 (132 aa).

The protein belongs to the universal ribosomal protein uS8 family. In terms of assembly, part of the 30S ribosomal subunit. Contacts proteins S5 and S12.

Functionally, one of the primary rRNA binding proteins, it binds directly to 16S rRNA central domain where it helps coordinate assembly of the platform of the 30S subunit. The sequence is that of Small ribosomal subunit protein uS8 from Listeria innocua serovar 6a (strain ATCC BAA-680 / CLIP 11262).